The sequence spans 514 residues: Na(+)/H(+) antiporter NhaB (514 aa).

12 consecutive transmembrane segments (helical) span residues L23–A43, P63–A83, L97–F117, L120–F140, F144–I164, L202–P222, F238–V258, A303–I323, L357–I377, L391–I411, A447–I467, and V475–F495.

It belongs to the NhaB Na(+)/H(+) (TC 2.A.34) antiporter family.

It localises to the cell inner membrane. It carries out the reaction 2 Na(+)(in) + 3 H(+)(out) = 2 Na(+)(out) + 3 H(+)(in). Functionally, na(+)/H(+) antiporter that extrudes sodium in exchange for external protons. This Citrobacter koseri (strain ATCC BAA-895 / CDC 4225-83 / SGSC4696) protein is Na(+)/H(+) antiporter NhaB.